The following is a 274-amino-acid chain: 2-dehydro-3-deoxyphosphooctonate aldolase (274 aa).

Belongs to the KdsA family.

It is found in the cytoplasm. It catalyses the reaction D-arabinose 5-phosphate + phosphoenolpyruvate + H2O = 3-deoxy-alpha-D-manno-2-octulosonate-8-phosphate + phosphate. Its pathway is carbohydrate biosynthesis; 3-deoxy-D-manno-octulosonate biosynthesis; 3-deoxy-D-manno-octulosonate from D-ribulose 5-phosphate: step 2/3. It participates in bacterial outer membrane biogenesis; lipopolysaccharide biosynthesis. This chain is 2-dehydro-3-deoxyphosphooctonate aldolase, found in Rickettsia bellii (strain OSU 85-389).